We begin with the raw amino-acid sequence, 407 residues long: Probable NADPH dehydrogenase (407 aa).

2 residues coordinate FMN: Thr49 and Gln124. Tyr206 serves as the catalytic Proton donor. Arg254 and Arg357 together coordinate FMN.

It belongs to the NADH:flavin oxidoreductase/NADH oxidase family. The cofactor is FMN.

It catalyses the reaction A + NADPH + H(+) = AH2 + NADP(+). Oxidoreductase that binds mammalian estrogens with high affinity. This Candida albicans (strain SC5314 / ATCC MYA-2876) (Yeast) protein is Probable NADPH dehydrogenase.